Consider the following 20-residue polypeptide: Dahlein-5.1 (20 aa).

In terms of tissue distribution, expressed by the skin dorsal glands.

It is found in the secreted. In terms of biological role, has no antimicrobial activity. Strongly inhibits the formation of NO by neuronal nitric oxide synthase at micromolar concentrations. Acts by a non-competitive mechanism, probably by binding to calcium/calmodulin and as a consequence blocking calmodulin attachment to nNOS. This is Dahlein-5.1 from Ranoidea dahlii (Dahl's aquatic frog).